Reading from the N-terminus, the 246-residue chain is DNA repair protein RecO (246 aa).

The protein belongs to the RecO family.

Involved in DNA repair and RecF pathway recombination. The sequence is that of DNA repair protein RecO from Maridesulfovibrio salexigens (strain ATCC 14822 / DSM 2638 / NCIMB 8403 / VKM B-1763) (Desulfovibrio salexigens).